Reading from the N-terminus, the 416-residue chain is Keratin, type I cuticular Ha1 (416 aa).

Residues proline 2–glutamate 56 are head. The IF rod domain maps to glutamate 56–leucine 367. Residues lysine 57 to arginine 91 are coil 1A. The linker 1 stretch occupies residues asparagine 92–alanine 102. The interval tyrosine 103–cysteine 203 is coil 1B. A linker 12 region spans residues glutamine 204–valine 219. Residues aspartate 220–glutamate 363 form a coil 2 region. The tail stretch occupies residues aspartate 364–arginine 416.

This sequence belongs to the intermediate filament family.

In Mus musculus (Mouse), this protein is Keratin, type I cuticular Ha1 (Krt31).